The following is a 269-amino-acid chain: Tryptophan synthase alpha chain (269 aa).

Residues glutamate 49 and aspartate 60 each act as proton acceptor in the active site.

It belongs to the TrpA family. As to quaternary structure, tetramer of two alpha and two beta chains.

The catalysed reaction is (1S,2R)-1-C-(indol-3-yl)glycerol 3-phosphate + L-serine = D-glyceraldehyde 3-phosphate + L-tryptophan + H2O. It participates in amino-acid biosynthesis; L-tryptophan biosynthesis; L-tryptophan from chorismate: step 5/5. The alpha subunit is responsible for the aldol cleavage of indoleglycerol phosphate to indole and glyceraldehyde 3-phosphate. The polypeptide is Tryptophan synthase alpha chain (Pseudomonas putida (strain W619)).